Reading from the N-terminus, the 417-residue chain is Gamma-glutamyl phosphate reductase (417 aa).

This sequence belongs to the gamma-glutamyl phosphate reductase family.

It localises to the cytoplasm. It catalyses the reaction L-glutamate 5-semialdehyde + phosphate + NADP(+) = L-glutamyl 5-phosphate + NADPH + H(+). The protein operates within amino-acid biosynthesis; L-proline biosynthesis; L-glutamate 5-semialdehyde from L-glutamate: step 2/2. Its function is as follows. Catalyzes the NADPH-dependent reduction of L-glutamate 5-phosphate into L-glutamate 5-semialdehyde and phosphate. The product spontaneously undergoes cyclization to form 1-pyrroline-5-carboxylate. The chain is Gamma-glutamyl phosphate reductase from Klebsiella pneumoniae subsp. pneumoniae (strain ATCC 700721 / MGH 78578).